The chain runs to 101 residues: Rho GTPase-activating protein 39 (101 aa).

Residues 1–96 (YEQCIAHYES…VLIQHLDTSF (96 aa)) form the Rho-GAP domain.

Preoptic area and testis.

The polypeptide is Rho GTPase-activating protein 39 (Arhgap39) (Rattus norvegicus (Rat)).